The following is a 125-amino-acid chain: Probable prefoldin subunit 6 (125 aa).

This sequence belongs to the prefoldin subunit beta family. In terms of assembly, heterohexamer of two PFD-alpha type and four PFD-beta type subunits.

Binds specifically to cytosolic chaperonin (c-CPN) and transfers target proteins to it. Binds to nascent polypeptide chain and promotes folding in an environment in which there are many competing pathways for nonnative proteins. The polypeptide is Probable prefoldin subunit 6 (Drosophila melanogaster (Fruit fly)).